The chain runs to 543 residues: Zinc finger CCCH-type with G patch domain-containing protein (543 aa).

Disordered regions lie at residues 55-79 (AATS…DNPI) and 95-132 (TEDS…DKLD). Over residues 65–76 (DTAGRAPPATAD) the composition is skewed to low complexity. Acidic residues predominate over residues 118-131 (DDDADNDDDADDKL). The segment at 186–209 (PCAYFLEGECRFTDEKCRYSHGEV) adopts a C3H1-type zinc-finger fold. The interval 272–304 (PFEDLLPLDEDEDGQEAAEDSESDTDGADEEEA) is disordered. A compositionally biased stretch (acidic residues) spans 277–304 (LPLDEDEDGQEAAEDSESDTDGADEEEA). Positions 335-381 (TRGIGSKIMQKMGYIVGTGLGREGEGIVVPVSAQVLPQGRSLDYCME) constitute a G-patch domain. The interval 438–460 (GAAGGESSRPNRNRPGALSRQEL) is disordered.

It localises to the nucleus. Functionally, transcription repressor. The polypeptide is Zinc finger CCCH-type with G patch domain-containing protein (Anopheles gambiae (African malaria mosquito)).